Here is a 360-residue protein sequence, read N- to C-terminus: Phospho-N-acetylmuramoyl-pentapeptide-transferase (360 aa).

10 consecutive transmembrane segments (helical) span residues 21–41, 73–93, 98–118, 132–152, 168–188, 199–219, 236–256, 263–283, 288–308, and 338–358; these read YITF…LWIG, TMGG…WADL, VWFV…DDYW, WKYF…YAVG, FMPQ…VGTS, GLAI…AWAT, AGEL…FLWY, VFMG…IAVL, LLLV…ILQV, and VIVC…VTLK.

The protein belongs to the glycosyltransferase 4 family. MraY subfamily. Mg(2+) serves as cofactor.

It localises to the cell inner membrane. The enzyme catalyses UDP-N-acetyl-alpha-D-muramoyl-L-alanyl-gamma-D-glutamyl-meso-2,6-diaminopimeloyl-D-alanyl-D-alanine + di-trans,octa-cis-undecaprenyl phosphate = di-trans,octa-cis-undecaprenyl diphospho-N-acetyl-alpha-D-muramoyl-L-alanyl-D-glutamyl-meso-2,6-diaminopimeloyl-D-alanyl-D-alanine + UMP. It functions in the pathway cell wall biogenesis; peptidoglycan biosynthesis. Functionally, catalyzes the initial step of the lipid cycle reactions in the biosynthesis of the cell wall peptidoglycan: transfers peptidoglycan precursor phospho-MurNAc-pentapeptide from UDP-MurNAc-pentapeptide onto the lipid carrier undecaprenyl phosphate, yielding undecaprenyl-pyrophosphoryl-MurNAc-pentapeptide, known as lipid I. The chain is Phospho-N-acetylmuramoyl-pentapeptide-transferase from Actinobacillus pleuropneumoniae serotype 7 (strain AP76).